The chain runs to 282 residues: HTH-type transcriptional activator RhaR (282 aa).

The 99-residue stretch at 179-277 (DKLITALANS…GMTPSQWRHL (99 aa)) folds into the HTH araC/xylS-type domain. 2 DNA-binding regions (H-T-H motif) span residues 196–217 (DAFCQQEQCSERVLRQQFRAQT) and 244–267 (ISEISMQCGFEDSNYFSVVFTRET).

Binds DNA as a dimer.

Its subcellular location is the cytoplasm. In terms of biological role, activates expression of the rhaSR operon in response to L-rhamnose. This chain is HTH-type transcriptional activator RhaR, found in Salmonella schwarzengrund (strain CVM19633).